Here is a 382-residue protein sequence, read N- to C-terminus: Alanine racemase 1 (382 aa).

The Proton acceptor; specific for D-alanine role is filled by Lys-39. Residue Lys-39 is modified to N6-(pyridoxal phosphate)lysine. Residue Arg-138 participates in substrate binding. Tyr-265 serves as the catalytic Proton acceptor; specific for L-alanine. Position 312 (Met-312) interacts with substrate.

This sequence belongs to the alanine racemase family. It depends on pyridoxal 5'-phosphate as a cofactor.

It carries out the reaction L-alanine = D-alanine. It functions in the pathway amino-acid biosynthesis; D-alanine biosynthesis; D-alanine from L-alanine: step 1/1. In terms of biological role, catalyzes the interconversion of L-alanine and D-alanine. May also act on other amino acids. The polypeptide is Alanine racemase 1 (alr1) (Staphylococcus aureus (strain NCTC 8325 / PS 47)).